The primary structure comprises 139 residues: Transcription factor E (139 aa).

The 85-residue stretch at 7-91 (IINKKQDEVS…DYEKILDTLL (85 aa)) folds into the HTH TFE/IIEalpha-type domain.

The protein belongs to the TFE family. In terms of assembly, monomer. Interaction with RNA polymerase subunits RpoF and RpoE is necessary for Tfe stimulatory transcription activity. Able to interact with Tbp and RNA polymerase in the absence of DNA promoter. Interacts both with the preinitiation and elongation complexes.

In terms of biological role, transcription factor that plays a role in the activation of archaeal genes transcribed by RNA polymerase. Facilitates transcription initiation by enhancing TATA-box recognition by TATA-box-binding protein (Tbp), and transcription factor B (Tfb) and RNA polymerase recruitment. Not absolutely required for transcription in vitro, but particularly important in cases where Tbp or Tfb function is not optimal. It dynamically alters the nucleic acid-binding properties of RNA polymerases by stabilizing the initiation complex and destabilizing elongation complexes. Seems to translocate with the RNA polymerase following initiation and acts by binding to the non template strand of the transcription bubble in elongation complexes. This chain is Transcription factor E, found in Nanoarchaeum equitans (strain Kin4-M).